The chain runs to 647 residues: Leucine-rich repeat and WD repeat-containing protein 1 (647 aa).

LRR repeat units follow at residues 22–43, 48–69, 70–91, and 92–113; these read KIRSLDLSGLELLSEHLDPKLL, QLQELDLSNNHLETLPDNLGLS, HLRVLRCANNQLGDVTALCQFP, and KLEELSLEGNPFLTVNDNLKVS. Positions 204–267 are disordered; sequence RTQVQKANSP…GSPVAGSDGS (64 aa). Residues serine 212, serine 243, serine 251, serine 259, and serine 264 each carry the phosphoserine modification. WD repeat units follow at residues 282-335, 341-379, 383-422, 426-472, 484-526, 542-582, and 598-646; these read HSKN…LHKY, EFFSVAWTALMVVTQAGHKKRWSVLAAAGLRGLVRLLHV, FCCGVIRAHKKAIATLCFSPAHETHLFTASYDKRIILWDI, NQDY…CWDV, EVEF…LWSW, VVLA…LYDV, and APTQ…IWGR.

The protein belongs to the LRWD1 family. As to quaternary structure, integral component of the ORC complex. Directly interacts with CDT1, GMNN and ORC2. Interacts with ORC2 only when non-ubiquitinated; this interaction prevents LRWD1 ubiquitination and degradation. Some of these interactions are regulated in a cell-cycle dependent manner. Interaction with ORC1 occurs predominantly during G1. Association with phosphorylated ORC1 during mitosis is not efficient. Interaction with CDT1 occurs during G1 phase, as well as during mitosis with phosphorylated CDT1. Interaction with GMNN occurs from G1/S to mitosis. Interaction with ORC2 is observed throughout the cell cycle. The stoichiometry of the ORCA/ORC/CDT1/GMNN complex is 1:1:1:2. Interacts with CUL4A and DDB1; this interaction may lead to ubiquitination. In terms of processing, ubiquitinated; undergoes 'Lys-48'-linked polyubiquitination leading to proteasomal degradation. Ubiquitination occurs within the WD repeats at the end of the G1 phase. Ubiquitination may be catalyzed by the CUL4-DDB1 E3 ubiquitin-protein ligase complex and other E3 ligases. In terms of tissue distribution, testis-specific. Drastically down-regulated in testis from patients with Sertoli cell-only syndrome (SCOS).

It is found in the nucleus. The protein localises to the chromosome. It localises to the centromere. Its subcellular location is the telomere. The protein resides in the cytoplasm. It is found in the cytoskeleton. The protein localises to the microtubule organizing center. It localises to the centrosome. Its subcellular location is the kinetochore. In terms of biological role, required for G1/S transition. Recruits and stabilizes the origin recognition complex (ORC) onto chromatin during G1 to establish pre-replication complex (preRC) and to heterochromatic sites in post-replicated cells. Binds a combination of DNA and histone methylation repressive marks on heterochromatin. Binds histone H3 and H4 trimethylation marks H3K9me3, H3K27me3 and H4K20me3 in a cooperative manner with DNA methylation. Required for silencing of major satellite repeats. May be important ORC2, ORC3 and ORC4 stability. The protein is Leucine-rich repeat and WD repeat-containing protein 1 (LRWD1) of Homo sapiens (Human).